The following is a 1488-amino-acid chain: Chromosome partition protein MukB (1488 aa).

34-41 (GGNGAGKS) contributes to the ATP binding site. Coiled coils occupy residues 326-413 (LEAD…QTRA), 444-472 (LDTFQAKEQEATEKLLSLEQKMSVAQTAH), and 509-602 (RHLA…RRAP). Residues 666–783 (PGGAEDQRLN…SLPIFGRAAR (118 aa)) are flexible hinge. 3 coiled-coil regions span residues 835-923 (EAEI…AKLE), 977-1116 (EMLS…AKAG), and 1209-1265 (VEAI…LQSV).

The protein belongs to the SMC family. MukB subfamily. Homodimerization via its hinge domain. Binds to DNA via its C-terminal region. Interacts, and probably forms a ternary complex, with MukE and MukF via its C-terminal region. The complex formation is stimulated by calcium or magnesium. Interacts with tubulin-related protein FtsZ.

It localises to the cytoplasm. The protein resides in the nucleoid. In terms of biological role, plays a central role in chromosome condensation, segregation and cell cycle progression. Functions as a homodimer, which is essential for chromosome partition. Involved in negative DNA supercoiling in vivo, and by this means organize and compact chromosomes. May achieve or facilitate chromosome segregation by condensation DNA from both sides of a centrally located replisome during cell division. The chain is Chromosome partition protein MukB from Salmonella paratyphi C (strain RKS4594).